The following is a 292-amino-acid chain: MFDDQDEIHPLLAGAPQTTEFRKLRKRIVREVREAIETYGMVERGARWLVCLSGGKDSYTLLAVLHELKWRGLLPVDLLACNLDQGQPGFPATVLPEFLSRMGVPHRIEYQDTYSIVMDKIPQGRTYCALCSRLRRGNLYRIAREEGCSAVVLGHHRDDILETFFMNLFHGGRLATMPPKLVNEDGDLFVYRPLAFVAEADCEKFARDMAYPIIPCDLCGSQEGLQRQQVKQILDGWEARSPGRRQVMFRALMNARPSHLLDPGLFDFLGLATAPRAAEERQDEPPHLRGEA.

The short motif at 53 to 58 is the PP-loop motif element; it reads SGGKDS. Cys128, Cys131, and Cys219 together coordinate [4Fe-4S] cluster.

This sequence belongs to the TtcA family. In terms of assembly, homodimer. Requires Mg(2+) as cofactor. It depends on [4Fe-4S] cluster as a cofactor.

The protein resides in the cytoplasm. It carries out the reaction cytidine(32) in tRNA + S-sulfanyl-L-cysteinyl-[cysteine desulfurase] + AH2 + ATP = 2-thiocytidine(32) in tRNA + L-cysteinyl-[cysteine desulfurase] + A + AMP + diphosphate + H(+). It participates in tRNA modification. Its function is as follows. Catalyzes the ATP-dependent 2-thiolation of cytidine in position 32 of tRNA, to form 2-thiocytidine (s(2)C32). The sulfur atoms are provided by the cysteine/cysteine desulfurase (IscS) system. The chain is tRNA-cytidine(32) 2-sulfurtransferase from Cereibacter sphaeroides (strain ATCC 17029 / ATH 2.4.9) (Rhodobacter sphaeroides).